The sequence spans 382 residues: Succinate--CoA ligase [ADP-forming] subunit beta (382 aa).

The 232-residue stretch at 9-240 folds into the ATP-grasp domain; it reads KELFSKYGVK…PRDVTEFEAY (232 aa). ATP contacts are provided by residues K45, 52–54, V94, and E99; that span reads GRG. Mg(2+) is bound by residues N193 and D207. Substrate contacts are provided by residues N260 and 317–319; that span reads GIT.

It belongs to the succinate/malate CoA ligase beta subunit family. As to quaternary structure, heterotetramer of two alpha and two beta subunits. The cofactor is Mg(2+).

It carries out the reaction succinate + ATP + CoA = succinyl-CoA + ADP + phosphate. It catalyses the reaction GTP + succinate + CoA = succinyl-CoA + GDP + phosphate. The protein operates within carbohydrate metabolism; tricarboxylic acid cycle; succinate from succinyl-CoA (ligase route): step 1/1. In terms of biological role, succinyl-CoA synthetase functions in the citric acid cycle (TCA), coupling the hydrolysis of succinyl-CoA to the synthesis of either ATP or GTP and thus represents the only step of substrate-level phosphorylation in the TCA. The beta subunit provides nucleotide specificity of the enzyme and binds the substrate succinate, while the binding sites for coenzyme A and phosphate are found in the alpha subunit. The polypeptide is Succinate--CoA ligase [ADP-forming] subunit beta (Pyrobaculum aerophilum (strain ATCC 51768 / DSM 7523 / JCM 9630 / CIP 104966 / NBRC 100827 / IM2)).